Here is a 188-residue protein sequence, read N- to C-terminus: Protein GrpE (188 aa).

The segment covering Met-1 to Gln-16 has biased composition (basic and acidic residues). Residues Met-1–Glu-31 form a disordered region.

The protein belongs to the GrpE family. Homodimer.

It localises to the cytoplasm. Participates actively in the response to hyperosmotic and heat shock by preventing the aggregation of stress-denatured proteins, in association with DnaK and GrpE. It is the nucleotide exchange factor for DnaK and may function as a thermosensor. Unfolded proteins bind initially to DnaJ; upon interaction with the DnaJ-bound protein, DnaK hydrolyzes its bound ATP, resulting in the formation of a stable complex. GrpE releases ADP from DnaK; ATP binding to DnaK triggers the release of the substrate protein, thus completing the reaction cycle. Several rounds of ATP-dependent interactions between DnaJ, DnaK and GrpE are required for fully efficient folding. The chain is Protein GrpE from Bacillus anthracis.